Consider the following 462-residue polypeptide: Exodeoxyribonuclease 7 large subunit (462 aa).

The protein belongs to the XseA family. Heterooligomer composed of large and small subunits.

Its subcellular location is the cytoplasm. The catalysed reaction is Exonucleolytic cleavage in either 5'- to 3'- or 3'- to 5'-direction to yield nucleoside 5'-phosphates.. In terms of biological role, bidirectionally degrades single-stranded DNA into large acid-insoluble oligonucleotides, which are then degraded further into small acid-soluble oligonucleotides. The protein is Exodeoxyribonuclease 7 large subunit of Pectobacterium carotovorum subsp. carotovorum (strain PC1).